Consider the following 448-residue polypeptide: Signal recognition particle 54 kDa protein (448 aa).

GTP contacts are provided by residues 107-114, 189-193, and 247-250; these read GIQGSGKT, DTAGR, and TKLD.

This sequence belongs to the GTP-binding SRP family. SRP54 subfamily. Part of the signal recognition particle protein translocation system, which is composed of SRP and FtsY. Archaeal SRP consists of a 7S RNA molecule of 300 nucleotides and two protein subunits: SRP54 and SRP19.

It is found in the cytoplasm. The catalysed reaction is GTP + H2O = GDP + phosphate + H(+). Involved in targeting and insertion of nascent membrane proteins into the cytoplasmic membrane. Binds to the hydrophobic signal sequence of the ribosome-nascent chain (RNC) as it emerges from the ribosomes. The SRP-RNC complex is then targeted to the cytoplasmic membrane where it interacts with the SRP receptor FtsY. This Thermococcus gammatolerans (strain DSM 15229 / JCM 11827 / EJ3) protein is Signal recognition particle 54 kDa protein.